A 183-amino-acid polypeptide reads, in one-letter code: Dermatopontin (183 aa).

Residue Gln-1 is modified to Pyrrolidone carboxylic acid. The residue at position 5 (Tyr-5) is a Sulfotyrosine. A run of 4 repeats spans residues 8-61 (PYQQ…ACMP), 52-57 (DRQWNY), 62-117 (TPQS…CCRY), and 107-112 (DREWQF). The segment at 8-117 (PYQQYHDYSD…REWQFYCCRY (110 aa)) is 2 X 53-55 AA tandem repeats. Intrachain disulfides connect Cys-32/Cys-59, Cys-72/Cys-114, Cys-88/Cys-115, Cys-121/Cys-178, and Cys-125/Cys-171. Positions 52-168 (DRQWNYACMP…AVERDRQWKF (117 aa)) are 3 X 6 AA tandem repeats of D-R-[EQ]-W-[NQK]-[FY]. 4 positions are modified to sulfotyrosine: Tyr-144, Tyr-146, Tyr-148, and Tyr-149. One copy of the 2-3 repeat lies at 163 to 168 (DRQWKF). At Tyr-176 the chain carries Sulfotyrosine.

This sequence belongs to the dermatopontin family. Interacts with TGFB1, DCN and collagen. In terms of processing, sulfated on tyrosine residue(s). As to expression, detected in skin, skeletal muscle, heart, lung, articular cartilage, long bone and calvaria. Smaller amounts detected in kidney. Not detected in brain, liver or spleen.

It is found in the secreted. Its subcellular location is the extracellular space. The protein resides in the extracellular matrix. In terms of biological role, seems to mediate adhesion by cell surface integrin binding. May serve as a communication link between the dermal fibroblast cell surface and its extracellular matrix environment. Enhances TGFB1 activity. Inhibits cell proliferation. Accelerates collagen fibril formation, and stabilizes collagen fibrils against low-temperature dissociation. In Sus scrofa (Pig), this protein is Dermatopontin (DPT).